Consider the following 210-residue polypeptide: ATP phosphoribosyltransferase (210 aa).

The protein belongs to the ATP phosphoribosyltransferase family. Short subfamily. In terms of assembly, heteromultimer composed of HisG and HisZ subunits.

It is found in the cytoplasm. The catalysed reaction is 1-(5-phospho-beta-D-ribosyl)-ATP + diphosphate = 5-phospho-alpha-D-ribose 1-diphosphate + ATP. It participates in amino-acid biosynthesis; L-histidine biosynthesis; L-histidine from 5-phospho-alpha-D-ribose 1-diphosphate: step 1/9. In terms of biological role, catalyzes the condensation of ATP and 5-phosphoribose 1-diphosphate to form N'-(5'-phosphoribosyl)-ATP (PR-ATP). Has a crucial role in the pathway because the rate of histidine biosynthesis seems to be controlled primarily by regulation of HisG enzymatic activity. The sequence is that of ATP phosphoribosyltransferase (hisG) from Synechocystis sp. (strain ATCC 27184 / PCC 6803 / Kazusa).